The sequence spans 715 residues: MTQHESANSQPSAFSLTFGDNGVAWLKIDVPNERMNTLQSAFVDQVTDVLAQLKDKKDIKGMVVYSGKPDNFIAGADIRMLAACQTADEAQQLAAKGQELFGQLEALPFHVVAAIHGPCLGGGLELALACHSRVCSDDDKTRLGLPEVQLGLLPGSGGTQRLPRLIGVANALDMILTGKQLRAKKAKNLGLVEEAVPLSILLDIAEKQALKGKPKRKGSFQEWAMGGNALGRSVVFDQAAKKTHEKTRGNYPAADAILDVIKYGLQHGMKKGLDQEAKRFGELVMTSESAALRSIFFATTAMKKESGSDALPATIKKVGVLGGGLMGGGISHVTATKAGYPVRIKDISNDGIKNALVYNFKLLDKQRKRRIISKAELQNKMFSITGGTTFTGFTNVDVVIEAVFEDINLKHQMVKDIEQQTSDYTIFASNTSSLPIHQIAAAAERPENVVGLHYFSPVEKMPLVEVIPHQGTENGSATSEQTIATVVALAKKQGKTPIVVADKAGFYVNRILAPYMNEAAAVLLSGEPIEHIDRSLLDFGFPVGPITLLDEVGVDIGAKISPILLAELGERFKAPDVFDLLLSDDRKGRKSGKGFYLYNTKKKEVDKSVYKLLSLEPEQKAAGQDIALRCTLMMLNEAARCLDEGVIKSARDGDIGAIFGIGFPPFLGGPFRYMDTLGAKRVVEMLKDHTDKYGGRFTPCDKLVAMANEEQSFYS.

An enoyl-CoA hydratase region spans residues 8-197 (NSQPSAFSLT…NLGLVEEAVP (190 aa)). The interval 313–715 (ATIKKVGVLG…MANEEQSFYS (403 aa)) is 3-hydroxyacyl-CoA dehydrogenase.

This sequence in the N-terminal section; belongs to the enoyl-CoA hydratase/isomerase family. It in the central section; belongs to the 3-hydroxyacyl-CoA dehydrogenase family. Heterotetramer of two alpha chains (FadJ) and two beta chains (FadI).

The protein localises to the cytoplasm. The enzyme catalyses a (3S)-3-hydroxyacyl-CoA = a (2E)-enoyl-CoA + H2O. It catalyses the reaction a 4-saturated-(3S)-3-hydroxyacyl-CoA = a (3E)-enoyl-CoA + H2O. It carries out the reaction a (3S)-3-hydroxyacyl-CoA + NAD(+) = a 3-oxoacyl-CoA + NADH + H(+). The catalysed reaction is (3S)-3-hydroxybutanoyl-CoA = (3R)-3-hydroxybutanoyl-CoA. Its pathway is lipid metabolism; fatty acid beta-oxidation. Functionally, catalyzes the formation of a hydroxyacyl-CoA by addition of water on enoyl-CoA. Also exhibits 3-hydroxyacyl-CoA epimerase and 3-hydroxyacyl-CoA dehydrogenase activities. This is Fatty acid oxidation complex subunit alpha from Photobacterium profundum (strain SS9).